The following is a 208-amino-acid chain: uncharacterized protein (208 aa).

The J domain occupies 4–71 (DYYAILNITP…SRRAQYDRES (68 aa)). The disordered stretch occupies residues 67–100 (YDRESASSSAKPRQSFFSRTNPQPQSQSQQGGPS). The span at 72–87 (ASSSAKPRQSFFSRTN) shows a compositional bias: polar residues. Low complexity predominate over residues 88-100 (PQPQSQSQQGGPS). Residues 127 to 147 (GIANAFWTIVGTLAGAALGFI) traverse the membrane as a helical segment.

Belongs to the DnaJ family.

The protein resides in the endoplasmic reticulum membrane. This is an uncharacterized protein from Schizosaccharomyces pombe (strain 972 / ATCC 24843) (Fission yeast).